We begin with the raw amino-acid sequence, 355 residues long: Guanine nucleotide-binding protein G(z) subunit alpha (355 aa).

The segment covering 1–14 (MGCRQSSEEKEAAR) has biased composition (basic and acidic residues). A disordered region spans residues 1-26 (MGCRQSSEEKEAARRSRRIDRHLRSE). The N-myristoyl glycine moiety is linked to residue Gly2. Cys3 carries S-palmitoyl cysteine lipidation. Positions 32–355 (REIKLLLLGT…QNNLKYIGLC (324 aa)) constitute a G-alpha domain. Residues 35–48 (KLLLLGTSNSGKST) are G1 motif. GTP contacts are provided by residues 40 to 47 (GTSNSGKS), 176 to 182 (LRSRDMT), 201 to 205 (DVGGQ), 270 to 273 (NKKD), and Ala327. A Mg(2+)-binding site is contributed by Ser47. The tract at residues 174-182 (DILRSRDMT) is G2 motif. At Arg179 the chain carries ADP-ribosylarginine; by cholera toxin. Thr182 is a binding site for Mg(2+). The segment at 197–206 (FKMVDVGGQR) is G3 motif. The interval 266–273 (ILFLNKKD) is G4 motif. The G5 motif stretch occupies residues 325–330 (TCATDT).

It belongs to the G-alpha family. G(i/o/t/z) subfamily. G-proteins are composed of 3 units; alpha, beta and gamma. The alpha chain contains the guanine nucleotide binding site. Interacts with ADGRB2.

The protein localises to the membrane. Functionally, guanine nucleotide-binding proteins (G proteins) are involved as modulators or transducers in various transmembrane signaling systems. This Homo sapiens (Human) protein is Guanine nucleotide-binding protein G(z) subunit alpha (GNAZ).